Reading from the N-terminus, the 215-residue chain is Large ribosomal subunit protein uL4 (215 aa).

Residues 43-100 form a disordered region; the sequence is AAKRQGTHSTKTRGEVSGGGKKPYRQKGSGRARQGSTRAPQFTGGGTVHGPKPRDYSQ.

This sequence belongs to the universal ribosomal protein uL4 family. Part of the 50S ribosomal subunit.

One of the primary rRNA binding proteins, this protein initially binds near the 5'-end of the 23S rRNA. It is important during the early stages of 50S assembly. It makes multiple contacts with different domains of the 23S rRNA in the assembled 50S subunit and ribosome. In terms of biological role, forms part of the polypeptide exit tunnel. The sequence is that of Large ribosomal subunit protein uL4 from Mycolicibacterium smegmatis (Mycobacterium smegmatis).